Reading from the N-terminus, the 298-residue chain is GTP cyclohydrolase FolE2 (298 aa).

The protein belongs to the GTP cyclohydrolase IV family.

It catalyses the reaction GTP + H2O = 7,8-dihydroneopterin 3'-triphosphate + formate + H(+). Its pathway is cofactor biosynthesis; 7,8-dihydroneopterin triphosphate biosynthesis; 7,8-dihydroneopterin triphosphate from GTP: step 1/1. Converts GTP to 7,8-dihydroneopterin triphosphate. The polypeptide is GTP cyclohydrolase FolE2 (Xylella fastidiosa (strain M23)).